A 469-amino-acid polypeptide reads, in one-letter code: IME2-dependent-signaling protein (469 aa).

Met1 is subject to N-acetylmethionine. Thr13 is modified (phosphothreonine). Disordered stretches follow at residues 22-55, 67-92, and 117-143; these read KSWS…PATM, ARGS…QQQQ, and DLTL…PPLT. Phosphoserine occurs at positions 23, 27, and 39. 2 stretches are compositionally biased toward polar residues: residues 25–42 and 67–82; these read SESQ…SPIG and ARGS…GSSQ. Phosphoserine occurs at positions 122, 130, 136, 147, and 148.

In terms of biological role, seems to act indirectly to modify IME2 activity, thus permitting IME2 to carry out later meiotic functions. This is IME2-dependent-signaling protein (IDS2) from Saccharomyces cerevisiae (strain ATCC 204508 / S288c) (Baker's yeast).